A 169-amino-acid polypeptide reads, in one-letter code: Protein Flattop homolog (169 aa).

The interval 53–169 (IPRSSRSPWG…SPKLATPEPC (117 aa)) is disordered. The span at 119 to 130 (VQASPRNASPLQ) shows a compositional bias: polar residues.

It belongs to the Flattop family.

It is found in the cytoplasm. The protein localises to the cytoskeleton. Its subcellular location is the cilium basal body. It localises to the cell projection. The protein resides in the cilium. It is found in the apical cell membrane. Functionally, acts as a regulator of cilium basal body docking and positioning in mono- and multiciliated cells. The protein is Protein Flattop homolog of Nematostella vectensis (Starlet sea anemone).